Here is a 243-residue protein sequence, read N- to C-terminus: 4-phosphopantoate--beta-alanine ligase (243 aa).

Residues R15, R37, 176 to 178 (DLN), and 182 to 183 (RT) contribute to the ATP site.

It belongs to the archaeal phosphopantothenate synthetase family. In terms of assembly, homodimer.

The catalysed reaction is (R)-4-phosphopantoate + beta-alanine + ATP = (R)-4'-phosphopantothenate + AMP + diphosphate + H(+). It participates in cofactor biosynthesis; coenzyme A biosynthesis. In terms of biological role, catalyzes the condensation of (R)-4-phosphopantoate and beta-alanine to 4'-phosphopantothenate in the CoA biosynthesis pathway. The chain is 4-phosphopantoate--beta-alanine ligase from Methanospirillum hungatei JF-1 (strain ATCC 27890 / DSM 864 / NBRC 100397 / JF-1).